A 113-amino-acid polypeptide reads, in one-letter code: uncharacterized protein (113 aa).

Residues 31-113 (SNNNNNNNNN…YSPTKFNLQY (83 aa)) are disordered. The segment covering 32-98 (NNNNNNNNNN…NNNNNNNNNN (67 aa)) has biased composition (low complexity). Positions 99 to 113 (SSSFEYSPTKFNLQY) are enriched in polar residues.

This is an uncharacterized protein from Dictyostelium discoideum (Social amoeba).